A 119-amino-acid chain; its full sequence is Large ribosomal subunit protein uL14 (119 aa).

The protein belongs to the universal ribosomal protein uL14 family. Part of the 50S ribosomal subunit. Forms a cluster with proteins L3 and L19. In the 70S ribosome, L14 and L19 interact and together make contacts with the 16S rRNA in bridges B5 and B8.

Its function is as follows. Binds to 23S rRNA. Forms part of two intersubunit bridges in the 70S ribosome. This chain is Large ribosomal subunit protein uL14, found in Neorickettsia sennetsu (strain ATCC VR-367 / Miyayama) (Ehrlichia sennetsu).